We begin with the raw amino-acid sequence, 237 residues long: Phosphoribosylaminoimidazole-succinocarboxamide synthase (237 aa).

It belongs to the SAICAR synthetase family.

The catalysed reaction is 5-amino-1-(5-phospho-D-ribosyl)imidazole-4-carboxylate + L-aspartate + ATP = (2S)-2-[5-amino-1-(5-phospho-beta-D-ribosyl)imidazole-4-carboxamido]succinate + ADP + phosphate + 2 H(+). It participates in purine metabolism; IMP biosynthesis via de novo pathway; 5-amino-1-(5-phospho-D-ribosyl)imidazole-4-carboxamide from 5-amino-1-(5-phospho-D-ribosyl)imidazole-4-carboxylate: step 1/2. This is Phosphoribosylaminoimidazole-succinocarboxamide synthase from Edwardsiella ictaluri (strain 93-146).